A 245-amino-acid polypeptide reads, in one-letter code: 8-amino-3,8-dideoxy-manno-octulosonate cytidylyltransferase (245 aa).

This sequence belongs to the KdsB family.

Its subcellular location is the cytoplasm. It carries out the reaction 8-amino-3,8-dideoxy-alpha-D-manno-octulosonate + CTP = CMP-8-amino-3,8-dideoxy-alpha-D-manno-oct-2-ulosonate + diphosphate. The protein operates within bacterial outer membrane biogenesis; lipopolysaccharide biosynthesis. Functionally, activates KDO8N (a required 8-carbon sugar) for incorporation into bacterial lipopolysaccharide in the Shewanella genus. The protein is 8-amino-3,8-dideoxy-manno-octulosonate cytidylyltransferase of Shewanella baltica (strain OS195).